The following is a 333-amino-acid chain: Foldase protein PrsA (333 aa).

The N-terminal stretch at 1–22 (MKKSTKLLAGIVTLASAMTLAA) is a signal peptide. Cys23 is lipidated: N-palmitoyl cysteine. Residue Cys23 is the site of S-diacylglycerol cysteine attachment. Positions 145–240 (TPEMTTQVTT…NKFYIVKVTK (96 aa)) constitute a PpiC domain. Residues 301–333 (DKKASKANTSKSDQKSSSDSSKDSQSSKSKSEK) form a disordered region. Over residues 312 to 322 (SDQKSSSDSSK) the composition is skewed to basic and acidic residues. Residues 323–333 (DSQSSKSKSEK) show a composition bias toward low complexity.

The protein belongs to the PrsA family.

It is found in the cell membrane. It catalyses the reaction [protein]-peptidylproline (omega=180) = [protein]-peptidylproline (omega=0). Functionally, plays a major role in protein secretion by helping the post-translocational extracellular folding of several secreted proteins. This Streptococcus equi subsp. equi (strain 4047) protein is Foldase protein PrsA.